We begin with the raw amino-acid sequence, 418 residues long: MAKLLQPPPKFLPSEWHIANKNQYHRADAQRSRSERLVAESQRLVDEIEKTTRKSQSDVNKKLEQRLEEVQFWKKELDDKLEQLVNVTDDLLIYKIRLEKALETLKEPLHITETCLAYREKRIGIDLVHDTVEHELIKEAEIIQGIMALLTRTLEEASEQIRMNRSAKYNLEKDLKDKFVALTIDDICFSLNNNSPNIRYSENAVRIEPNSVSLEDWLDFSSTNVEKADKQRNNSLMLKALVDRILSQTANDLRKQCDVVDTAFKNGLKDTKDARDKLADHLAKVMEEIASQEKNITALEKAILDQEGPAKVAHTRLETRTHRPNVELCRDVAQYRLMKEVQEITHNVARLKETLAQAQAELKGLHRRQLALQEEIQVKENTIYIDEVLCMQMRKSIPLRDGEDHGVWAGGLRPDAVC.

Coiled-coil stretches lie at residues 21–107 (KNQY…TLKE), 134–177 (HELI…DLKD), 266–308 (NGLK…DQEG), and 333–384 (AQYR…NTIY).

The protein belongs to the tektin family. Microtubule inner protein component of sperm flagellar doublet microtubules. Post-translationally, ubiquitinated, leading to its degradation. Deubiquitinated by USP16, promoting its stability. As to expression, predominantly expressed in testis. Expressed in airway epithelial cells.

It localises to the cytoplasm. Its subcellular location is the cytoskeleton. The protein resides in the cilium axoneme. The protein localises to the flagellum axoneme. In terms of biological role, microtubule inner protein (MIP) part of the dynein-decorated doublet microtubules (DMTs) in cilia and flagellar axoneme. Forms filamentous polymers in the walls of ciliary and flagellar microtubules. This Homo sapiens (Human) protein is Tektin-1 (TEKT1).